The sequence spans 85 residues: MPKLEMMLLVLLILPLCYIDAVGPLPPWNMEDEIIEHWQKLHCYEISDLTPWILCSPEPLCGGKGCCAQEVCDCSGPACTCPPCL.

Residues Met1 to Ala21 form the signal peptide. Positions Val22–Lys40 are excised as a propeptide.

Belongs to the conotoxin D superfamily. Post-translationally, contains 5 disulfide bonds. Expressed by the venom duct.

The protein localises to the secreted. Probable neurotoxin. This is Conotoxin Lt28.3 from Conus litteratus (Lettered cone).